A 583-amino-acid polypeptide reads, in one-letter code: Membrane protein insertase YidC (583 aa).

A run of 6 helical transmembrane segments spans residues 5-25, 341-361, 362-382, 427-447, 473-493, and 520-540; these read SVTGLAIIAVIMIVWLQFMSP, PFAEFIILPVFSWMNGFVSNY, GLIIIIFAFLIKLVTYPLSMA, IGGCLPVVLQMPLLFAMFYVF, FGFAIPMYGSHIAVFPILMAV, and AMMLLFFNNMPAGLGLYYLMF.

This sequence belongs to the OXA1/ALB3/YidC family. Type 1 subfamily. In terms of assembly, interacts with the Sec translocase complex via SecD. Specifically interacts with transmembrane segments of nascent integral membrane proteins during membrane integration.

Its subcellular location is the cell inner membrane. In terms of biological role, required for the insertion and/or proper folding and/or complex formation of integral membrane proteins into the membrane. Involved in integration of membrane proteins that insert both dependently and independently of the Sec translocase complex, as well as at least some lipoproteins. Aids folding of multispanning membrane proteins. The sequence is that of Membrane protein insertase YidC from Pelodictyon phaeoclathratiforme (strain DSM 5477 / BU-1).